Consider the following 431-residue polypeptide: Histidinol dehydrogenase (431 aa).

Tyr124, Gln187, and Asn210 together coordinate NAD(+). Substrate contacts are provided by Ser236, Gln258, and His261. Zn(2+)-binding residues include Gln258 and His261. Active-site proton acceptor residues include Glu325 and His326. 4 residues coordinate substrate: His326, Asp359, Glu413, and His418. Residue Asp359 participates in Zn(2+) binding. His418 is a Zn(2+) binding site.

Belongs to the histidinol dehydrogenase family. The cofactor is Zn(2+).

The enzyme catalyses L-histidinol + 2 NAD(+) + H2O = L-histidine + 2 NADH + 3 H(+). It functions in the pathway amino-acid biosynthesis; L-histidine biosynthesis; L-histidine from 5-phospho-alpha-D-ribose 1-diphosphate: step 9/9. Functionally, catalyzes the sequential NAD-dependent oxidations of L-histidinol to L-histidinaldehyde and then to L-histidine. The protein is Histidinol dehydrogenase of Legionella pneumophila subsp. pneumophila (strain Philadelphia 1 / ATCC 33152 / DSM 7513).